The chain runs to 97 residues: Aspartyl/glutamyl-tRNA(Asn/Gln) amidotransferase subunit C (97 aa).

Over residues 74 to 84 (TPEEATAAAPA) the composition is skewed to low complexity. The tract at residues 74 to 97 (TPEEATAAAPAREGTAFKVPRIIE) is disordered.

This sequence belongs to the GatC family. In terms of assembly, heterotrimer of A, B and C subunits.

The catalysed reaction is L-glutamyl-tRNA(Gln) + L-glutamine + ATP + H2O = L-glutaminyl-tRNA(Gln) + L-glutamate + ADP + phosphate + H(+). It catalyses the reaction L-aspartyl-tRNA(Asn) + L-glutamine + ATP + H2O = L-asparaginyl-tRNA(Asn) + L-glutamate + ADP + phosphate + 2 H(+). Functionally, allows the formation of correctly charged Asn-tRNA(Asn) or Gln-tRNA(Gln) through the transamidation of misacylated Asp-tRNA(Asn) or Glu-tRNA(Gln) in organisms which lack either or both of asparaginyl-tRNA or glutaminyl-tRNA synthetases. The reaction takes place in the presence of glutamine and ATP through an activated phospho-Asp-tRNA(Asn) or phospho-Glu-tRNA(Gln). The chain is Aspartyl/glutamyl-tRNA(Asn/Gln) amidotransferase subunit C from Anaeromyxobacter dehalogenans (strain 2CP-1 / ATCC BAA-258).